The chain runs to 333 residues: Structure-specific endonuclease subunit SLX1 homolog (333 aa).

The region spanning Asp68–Leu157 is the GIY-YIG domain. Residues Cys237–Cys293 form an SLX1-type zinc finger.

This sequence belongs to the SLX1 family. In terms of assembly, forms a heterodimer with a member of the SLX4 family. A divalent metal cation is required as a cofactor.

The protein localises to the nucleus. Catalytic subunit of a heterodimeric structure-specific endonuclease that resolves DNA secondary structures generated during DNA repair and recombination. Has endonuclease activity towards branched DNA substrates, introducing single-strand cuts in duplex DNA close to junctions with ss-DNA. The protein is Structure-specific endonuclease subunit SLX1 homolog of Brugia malayi (Filarial nematode worm).